Consider the following 314-residue polypeptide: tRNA pseudouridine synthase B (314 aa).

A substrate-binding site is contributed by His-43. Asp-48 functions as the Nucleophile in the catalytic mechanism. Substrate contacts are provided by Tyr-76, Tyr-179, and Leu-200.

This sequence belongs to the pseudouridine synthase TruB family. Type 1 subfamily.

The enzyme catalyses uridine(55) in tRNA = pseudouridine(55) in tRNA. Responsible for synthesis of pseudouridine from uracil-55 in the psi GC loop of transfer RNAs. The polypeptide is tRNA pseudouridine synthase B (Salmonella paratyphi A (strain ATCC 9150 / SARB42)).